We begin with the raw amino-acid sequence, 174 residues long: Ribosome maturation factor RimP (174 aa).

It belongs to the RimP family.

The protein resides in the cytoplasm. Required for maturation of 30S ribosomal subunits. The chain is Ribosome maturation factor RimP from Bdellovibrio bacteriovorus (strain ATCC 15356 / DSM 50701 / NCIMB 9529 / HD100).